The sequence spans 61 residues: Protein YncO (61 aa).

The chain crosses the membrane as a helical span at residues 18–38 (HVFLYVFYIFLFLVLFIMTIY).

Its subcellular location is the cell inner membrane. The protein is Protein YncO of Escherichia coli (strain K12).